The following is a 453-amino-acid chain: Allantoinase (453 aa).

The Zn(2+) site is built by histidine 59, histidine 61, lysine 146, histidine 186, histidine 242, and aspartate 315. The residue at position 146 (lysine 146) is an N6-carboxylysine.

Belongs to the metallo-dependent hydrolases superfamily. Allantoinase family. As to quaternary structure, homotetramer. It depends on Zn(2+) as a cofactor. Carboxylation allows a single lysine to coordinate two zinc ions.

It carries out the reaction (S)-allantoin + H2O = allantoate + H(+). Its pathway is nitrogen metabolism; (S)-allantoin degradation; allantoate from (S)-allantoin: step 1/1. Catalyzes the conversion of allantoin (5-ureidohydantoin) to allantoic acid by hydrolytic cleavage of the five-member hydantoin ring. This is Allantoinase from Salmonella choleraesuis (strain SC-B67).